Reading from the N-terminus, the 437-residue chain is Glucose-1-phosphate adenylyltransferase (437 aa).

Residues Tyr-113, Gly-179, Glu-194–Lys-195, and Ser-212 contribute to the alpha-D-glucose 1-phosphate site.

The protein belongs to the bacterial/plant glucose-1-phosphate adenylyltransferase family. In terms of assembly, homotetramer.

It carries out the reaction alpha-D-glucose 1-phosphate + ATP + H(+) = ADP-alpha-D-glucose + diphosphate. It functions in the pathway glycan biosynthesis; glycogen biosynthesis. In terms of biological role, involved in the biosynthesis of ADP-glucose, a building block required for the elongation reactions to produce glycogen. Catalyzes the reaction between ATP and alpha-D-glucose 1-phosphate (G1P) to produce pyrophosphate and ADP-Glc. In Haemophilus influenzae (strain 86-028NP), this protein is Glucose-1-phosphate adenylyltransferase.